Consider the following 414-residue polypeptide: S-adenosylmethionine synthase (414 aa).

Position 11 (His11) interacts with ATP. Residue Asp13 coordinates Mg(2+). Glu39 serves as a coordination point for K(+). Residues Glu52 and Gln95 each coordinate L-methionine. The tract at residues 95-105 is flexible loop; the sequence is QSPDIAQGVNL. ATP is bound by residues 169-171, 245-246, Asp254, 260-261, Ala277, and Lys281; these read DGK, KF, and RK. Residue Asp254 participates in L-methionine binding. Lys285 lines the L-methionine pocket.

Belongs to the AdoMet synthase family. In terms of assembly, homotetramer; dimer of dimers. Mg(2+) is required as a cofactor. Requires K(+) as cofactor.

It is found in the cytoplasm. It carries out the reaction L-methionine + ATP + H2O = S-adenosyl-L-methionine + phosphate + diphosphate. It functions in the pathway amino-acid biosynthesis; S-adenosyl-L-methionine biosynthesis; S-adenosyl-L-methionine from L-methionine: step 1/1. In terms of biological role, catalyzes the formation of S-adenosylmethionine (AdoMet) from methionine and ATP. The overall synthetic reaction is composed of two sequential steps, AdoMet formation and the subsequent tripolyphosphate hydrolysis which occurs prior to release of AdoMet from the enzyme. The polypeptide is S-adenosylmethionine synthase (Synechococcus sp. (strain JA-3-3Ab) (Cyanobacteria bacterium Yellowstone A-Prime)).